A 314-amino-acid chain; its full sequence is Probable serine/threonine-protein kinase WNK11 (314 aa).

The interval 1-22 is disordered; that stretch reads MMTCASSDDNESEKDKDSESFV. A Protein kinase domain is found at 31–289; the sequence is GRYGELLGSG…AAELLCDPFF (259 aa). Residue 111 to 114 coordinates ATP; sequence TEIC. The Proton acceptor role is filled by Asp-178. Positions 295 to 314 are disordered; sequence DDDEDGENNDNNGAGRIVVS.

Belongs to the protein kinase superfamily. Ser/Thr protein kinase family. WNK subfamily.

It catalyses the reaction L-seryl-[protein] + ATP = O-phospho-L-seryl-[protein] + ADP + H(+). It carries out the reaction L-threonyl-[protein] + ATP = O-phospho-L-threonyl-[protein] + ADP + H(+). Its function is as follows. May regulate flowering time by modulating the photoperiod pathway. The protein is Probable serine/threonine-protein kinase WNK11 (WNK11) of Arabidopsis thaliana (Mouse-ear cress).